The chain runs to 870 residues: DNA mismatch repair protein MutS (870 aa).

616-623 contributes to the ATP binding site; that stretch reads GPNMAGKS.

It belongs to the DNA mismatch repair MutS family.

In terms of biological role, this protein is involved in the repair of mismatches in DNA. It is possible that it carries out the mismatch recognition step. This protein has a weak ATPase activity. The sequence is that of DNA mismatch repair protein MutS from Parabacteroides distasonis (strain ATCC 8503 / DSM 20701 / CIP 104284 / JCM 5825 / NCTC 11152).